We begin with the raw amino-acid sequence, 732 residues long: Translation initiation factor eIF2B subunit epsilon (732 aa).

The region spanning 559 to 726 is the W2 domain; it reads GEEEEDFGVE…QEADEEDSDE (168 aa).

Belongs to the eIF-2B gamma/epsilon subunits family. In terms of assembly, component of the translation initiation factor 2B (eIF2B) complex which is a heterodecamer of two sets of five different subunits: alpha, beta, gamma, delta and epsilon. Subunits alpha, beta and delta comprise a regulatory subcomplex and subunits epsilon and gamma comprise a catalytic subcomplex. Within the complex, the hexameric regulatory complex resides at the center, with the two heterodimeric catalytic subcomplexes bound on opposite sides.

The protein resides in the cytoplasm. Its subcellular location is the cytosol. In terms of biological role, acts as a component of the translation initiation factor 2B (eIF2B) complex, which catalyzes the exchange of GDP for GTP on the eukaryotic initiation factor 2 (eIF2) complex gamma subunit. Its guanine nucleotide exchange factor activity is repressed when bound to eIF2 complex phosphorylated on the alpha subunit, thereby limiting the amount of methionyl-initiator methionine tRNA available to the ribosome and consequently global translation is repressed. This chain is Translation initiation factor eIF2B subunit epsilon (GCD6), found in Candida albicans (strain SC5314 / ATCC MYA-2876) (Yeast).